The following is a 235-amino-acid chain: Elongation factor Tu, chloroplastic (235 aa).

In terms of domain architecture, tr-type G spans 1–125; sequence KNMITGAAQM…SVDSYIPTPI (125 aa). GTP is bound at residue 47-50; that stretch reads NKED.

It belongs to the TRAFAC class translation factor GTPase superfamily. Classic translation factor GTPase family. EF-Tu/EF-1A subfamily.

It localises to the plastid. It is found in the chloroplast. The catalysed reaction is GTP + H2O = GDP + phosphate + H(+). Functionally, GTP hydrolase that promotes the GTP-dependent binding of aminoacyl-tRNA to the A-site of ribosomes during protein biosynthesis. This is Elongation factor Tu, chloroplastic (tufA) from Costaria costata (Five-ribbed kelp).